An 828-amino-acid polypeptide reads, in one-letter code: MSRNLPNPSLVGILFVVSTHSGPQLLYKYPHNLTDRVFSLVPRKHAGTEDGMQHLVRDDKDDDDDDELYEYNEDEDPESGDLLFFDKDGTSRDRSGINVISDTNHSQYYYGTKLELKRTLDEGRALRRATPHKYNHNRLSTEHPKRNEHSQGSKSRRSIRNTDTTQDDNYQKQKGQQEGREKKDKDKEKEKEKDAEEKGDVSEPHSAVDTFSIADDIFGMAPGYLCEILSPPRQMCNTRYEVTIQDKIFLGLPIHQHADGTWTNARSSKRSQSGRSNSLHFENLTSSTEAQLASTTAQSLTMFHLVFIMNPPATECSYRIDEMFQHVASRTSLGLRLAQQKHNYVGNQMKAIQRAREQECKEVDLDKTLSLCKLIKECYLAISTSRIANLEIDGKQVVCQIPTKYEFDSLPEPSVPYIPRSFLSSSIHSFGMWDRSNIEQQKLDDDFLQESIMCFALLLLAEPHNILQDMNIVTNSPFGKFIMLLHPSESLLKFCSKNSQHFEPSEVKSYALHLIYWKKARAIQPLSSRSVYVASPMASLTTKLFEDIYRFKARFPMSPSLPQFLKLLSPQLKKPQQFASIIPSRDHRASYFEALAWLIRFGYVNQQLTFVWLKIPKNLRVKVEEDMENEDALLKRNKDRVFGEKSQTTDNTSKTMAVQESPHNNDITTTRDTKISNNRNNGSDFDTDADANVNVNSDANTSTNAAVANTAAGLVDARKDSLINATTETTESQTERLKKQLTLSVVDDEDTIILEPGRASTLERRWINEIISVCKLSHDLIAIFYKLLKFMNGKTPLEFLIIKNEISRLDLKKLLYAIGNYIVSVRHW.

Residues 1–21 form the signal peptide; that stretch reads MSRNLPNPSLVGILFVVSTHS. The segment covering 49–59 has biased composition (basic and acidic residues); sequence EDGMQHLVRDD. 3 disordered regions span residues 49–87, 127–207, and 644–688; these read EDGMQHLVRDDKDDDDDDELYEYNEDEDPESGDLLFFDK, RRAT…PHSA, and EKSQ…FDTD. The span at 60-79 shows a compositional bias: acidic residues; that stretch reads KDDDDDDELYEYNEDEDPES. Residues 127-136 are compositionally biased toward basic residues; the sequence is RRATPHKYNH. 2 stretches are compositionally biased toward basic and acidic residues: residues 139–151 and 169–203; these read LSTEHPKRNEHSQ and NYQKQKGQQEGREKKDKDKEKEKEKDAEEKGDVSE. 2 stretches are compositionally biased toward polar residues: residues 645–668 and 675–684; these read KSQTTDNTSKTMAVQESPHNNDIT and ISNNRNNGSD.

Belongs to the NPR3 family.

Functionally, mediates inactivation of the TORC1 complex in response to amino acid starvation. Required for meiotic nuclear division. This is Nitrogen permease regulator 3 (NPR3) from Lodderomyces elongisporus (strain ATCC 11503 / CBS 2605 / JCM 1781 / NBRC 1676 / NRRL YB-4239) (Yeast).